The primary structure comprises 78 residues: MASGSGPGAAASANLNAVRETMDVLLEISRILNTGLDMETLSICVRLCEQGINPEALSSVIKELRKGTEALKAAENTS.

Ala2 is modified (N-acetylalanine).

Belongs to the MOZART1 family. In terms of assembly, associates with the gamma-tubulin ring complex (gTuRC) consisting of TUBGCP2, TUBGCP3, TUBGCP4, TUBGCP5 and TUBGCP6 and gamma-tubulin TUBG1 or TUBG2; within the complex, interacts with TUBGCP3 and TUBGCP6 to form a luminal bridge with actin that stabilizes the initial structure during complex assembly. Interacts with TUBG1.

Its subcellular location is the cytoplasm. The protein localises to the cytoskeleton. It is found in the microtubule organizing center. The protein resides in the centrosome. It localises to the spindle. In terms of biological role, required for the recruitment and the assembly of the gamma-tubulin ring complex (gTuRC) at the centrosome. The gTuRC regulates the minus-end nucleation of alpha-beta tubulin heterodimers that grow into microtubule protafilaments, a critical step in centrosome duplication and spindle formation. The polypeptide is Mitotic-spindle organizing protein 1 (Mzt1) (Mus musculus (Mouse)).